Here is a 272-residue protein sequence, read N- to C-terminus: Sulfate transporter CysZ (272 aa).

The next 4 helical transmembrane spans lie at 29 to 49 (FVIM…WLFI), 66 to 86 (WLSF…LLLF), 148 to 168 (IIAL…VPVL), and 219 to 239 (FVPV…TLMW).

The protein belongs to the CysZ family.

Its subcellular location is the cell inner membrane. Its function is as follows. High affinity, high specificity proton-dependent sulfate transporter, which mediates sulfate uptake. Provides the sulfur source for the cysteine synthesis pathway. This chain is Sulfate transporter CysZ, found in Haemophilus influenzae (strain PittGG).